Here is a 57-residue protein sequence, read N- to C-terminus: UPF0509 protein YciZ (57 aa).

Belongs to the UPF0509 family.

The chain is UPF0509 protein YciZ (yciZ) from Escherichia coli O157:H7.